The sequence spans 450 residues: Adenylosuccinate lyase (450 aa).

N(6)-(1,2-dicarboxyethyl)-AMP is bound by residues Arg-9 to Tyr-10, His-75 to Asp-77, and Thr-101 to Ser-102. His-149 serves as the catalytic Proton donor/acceptor. Residue Gln-223 coordinates N(6)-(1,2-dicarboxyethyl)-AMP. Residue Ser-273 is the Proton donor/acceptor of the active site. Residues Ser-274, Lys-279 to Asn-281, and Ser-318 to Val-322 each bind N(6)-(1,2-dicarboxyethyl)-AMP.

The protein belongs to the lyase 1 family. Adenylosuccinate lyase subfamily. In terms of assembly, homotetramer. Residues from neighboring subunits contribute catalytic and substrate-binding residues to each active site.

It catalyses the reaction N(6)-(1,2-dicarboxyethyl)-AMP = fumarate + AMP. The catalysed reaction is (2S)-2-[5-amino-1-(5-phospho-beta-D-ribosyl)imidazole-4-carboxamido]succinate = 5-amino-1-(5-phospho-beta-D-ribosyl)imidazole-4-carboxamide + fumarate. It functions in the pathway purine metabolism; AMP biosynthesis via de novo pathway; AMP from IMP: step 2/2. Its pathway is purine metabolism; IMP biosynthesis via de novo pathway; 5-amino-1-(5-phospho-D-ribosyl)imidazole-4-carboxamide from 5-amino-1-(5-phospho-D-ribosyl)imidazole-4-carboxylate: step 2/2. Functionally, catalyzes two reactions in de novo purine nucleotide biosynthesis. Catalyzes the breakdown of 5-aminoimidazole- (N-succinylocarboxamide) ribotide (SAICAR or 2-[5-amino-1-(5-phospho-beta-D-ribosyl)imidazole-4-carboxamido]succinate) to 5-aminoimidazole-4-carboxamide ribotide (AICAR or 5-amino-1-(5-phospho-beta-D-ribosyl)imidazole-4-carboxamide) and fumarate, and of adenylosuccinate (ADS or N(6)-(1,2-dicarboxyethyl)-AMP) to adenosine monophosphate (AMP) and fumarate. The polypeptide is Adenylosuccinate lyase (purB) (Pyrococcus horikoshii (strain ATCC 700860 / DSM 12428 / JCM 9974 / NBRC 100139 / OT-3)).